The sequence spans 139 residues: Large ribosomal subunit protein bL17 (139 aa).

Belongs to the bacterial ribosomal protein bL17 family. In terms of assembly, part of the 50S ribosomal subunit. Contacts protein L32.

This Azorhizobium caulinodans (strain ATCC 43989 / DSM 5975 / JCM 20966 / LMG 6465 / NBRC 14845 / NCIMB 13405 / ORS 571) protein is Large ribosomal subunit protein bL17.